The sequence spans 189 residues: Threonylcarbamoyl-AMP synthase (189 aa).

One can recognise a YrdC-like domain in the interval 7–189 (NFTVKGLTEQ…DAITGKIIRK (183 aa)).

Belongs to the SUA5 family. TsaC subfamily.

The protein localises to the cytoplasm. The enzyme catalyses L-threonine + hydrogencarbonate + ATP = L-threonylcarbamoyladenylate + diphosphate + H2O. Functionally, required for the formation of a threonylcarbamoyl group on adenosine at position 37 (t(6)A37) in tRNAs that read codons beginning with adenine. Catalyzes the conversion of L-threonine, HCO(3)(-)/CO(2) and ATP to give threonylcarbamoyl-AMP (TC-AMP) as the acyladenylate intermediate, with the release of diphosphate. The sequence is that of Threonylcarbamoyl-AMP synthase from Blochmanniella floridana.